Here is a 172-residue protein sequence, read N- to C-terminus: Transcriptional activator protein (172 aa).

The short motif at 56–71 is the Nuclear localization signal element; it reads KAQHRIAKHKAIRRRR. A zinc finger spans residues 76–93; sequence CGCSIFYHIKCADHGFTH. The segment at 119–172 is disordered; that stretch reads DHAGGRSSIHTDKDIPHPNQVQSQPQESTGSPQSIPELPSLDDIDSSFWDDIFK. Over residues 137–152 the composition is skewed to polar residues; that stretch reads NQVQSQPQESTGSPQS. The interval 158–172 is transactivation; the sequence is SLDDIDSSFWDDIFK.

The protein belongs to the geminiviridae transcriptional activator protein family. Monomer. Homodimer. Homooligomer. Self-interaction correlates with nuclear localization and efficient activation of transcription. Monomers suppress local silencing by interacting with and inactivating host adenosine kinase 2 (ADK2) in the cytoplasm. Interacts with and inhibits host SNF1 kinase. Binds to ssDNA. Post-translationally, phosphorylated.

Its subcellular location is the host nucleus. It is found in the host cytoplasm. In terms of biological role, strong activator of the late viral genes promoters. Enhances the expression of the capsid protein and nuclear shuttle protein. Acts as a suppressor of RNA-mediated gene silencing, also known as post-transcriptional gene silencing (PTGS), a mechanism of plant viral defense that limits the accumulation of viral RNAs. Suppresses the host RNA silencing by inhibiting adenosine kinase 2 (ADK2), a kinase involved in a general methylation pathway. Also suppresses the host basal defense by interacting with and inhibiting SNF1 kinase, a key regulator of cell metabolism implicated in innate antiviral defense. Determines pathogenicity. This is Transcriptional activator protein from Bean golden yellow mosaic virus (isolate Puerto Rico) (BGYMV).